The following is a 134-amino-acid chain: ATP synthase epsilon chain (134 aa).

Residues 94–104 (AKLAKSRAESH) show a composition bias toward basic and acidic residues. The disordered stretch occupies residues 94–115 (AKLAKSRAESHLEEDDDNTDIN).

It belongs to the ATPase epsilon chain family. F-type ATPases have 2 components, CF(1) - the catalytic core - and CF(0) - the membrane proton channel. CF(1) has five subunits: alpha(3), beta(3), gamma(1), delta(1), epsilon(1). CF(0) has three main subunits: a, b and c.

The protein resides in the cell membrane. Functionally, produces ATP from ADP in the presence of a proton gradient across the membrane. This is ATP synthase epsilon chain from Staphylococcus epidermidis (strain ATCC 35984 / DSM 28319 / BCRC 17069 / CCUG 31568 / BM 3577 / RP62A).